A 251-amino-acid chain; its full sequence is DNA polymerase sliding clamp 2 (251 aa).

Belongs to the PCNA family. In terms of assembly, heterotrimer. The subunits circularize to form a toroid; DNA passes through its center. Replication factor C (RFC) is required to load the toroid on the DNA.

Functionally, sliding clamp subunit that acts as a moving platform for DNA processing. Responsible for tethering the catalytic subunit of DNA polymerase and other proteins to DNA during high-speed replication. This is DNA polymerase sliding clamp 2 from Aeropyrum pernix (strain ATCC 700893 / DSM 11879 / JCM 9820 / NBRC 100138 / K1).